Here is a 97-residue protein sequence, read N- to C-terminus: Putative pterin-4-alpha-carbinolamine dehydratase (97 aa).

The protein belongs to the pterin-4-alpha-carbinolamine dehydratase family.

The enzyme catalyses (4aS,6R)-4a-hydroxy-L-erythro-5,6,7,8-tetrahydrobiopterin = (6R)-L-erythro-6,7-dihydrobiopterin + H2O. The polypeptide is Putative pterin-4-alpha-carbinolamine dehydratase (Christiangramia forsetii (strain DSM 17595 / CGMCC 1.15422 / KT0803) (Gramella forsetii)).